Here is a 401-residue protein sequence, read N- to C-terminus: Multidrug resistance protein MdtH (401 aa).

At 1–12 (MSRVSQARNLGK) the chain is on the cytoplasmic side. Residues 13–33 (YFLLIDNMLVVLGFFVVFPLV) traverse the membrane as a helical segment. Over 34–98 (SIRFVDQMGW…GFATMGIAHE (65 aa)) the chain is Periplasmic. A helical transmembrane segment spans residues 99 to 116 (PWLLWFSCLLSGLGGTLF). The Cytoplasmic segment spans residues 117–137 (DPPRSALVVKLMPQQRGRFFS). Residues 138–158 (LLMMQDSAGAVIGALLGSWLL) traverse the membrane as a helical segment. The Periplasmic segment spans residues 159 to 163 (QYDFR). Residues 164-184 (LVCATGAVLFVLCAAFNAWLL) form a helical membrane-spanning segment. The Cytoplasmic portion of the chain corresponds to 185–212 (PAWKLSTIRTPVREGMTRVMRDKRFVTY). Residues 213-233 (VLTLAGYYMLAVQVMLMLPIM) form a helical membrane-spanning segment. The Periplasmic segment spans residues 234–242 (VNDVAGAPS). The helical transmembrane segment at 243-263 (AVKWMYAIEACLSLTLLYPIA) threads the bilayer. Over 264–275 (RWSEKHFRLEHR) the chain is Cytoplasmic. The helical transmembrane segment at 276–296 (LMAGLLIMSLSMMPVGMVSGL) threads the bilayer. Over 297–298 (QQ) the chain is Periplasmic. Residues 299–319 (LFTLICLFYIGSIIAEPARET) form a helical membrane-spanning segment. Over 320–338 (LSASLADARARGSYMGFSR) the chain is Cytoplasmic. Residues 339–359 (LGLAIGGTIGYIGGGWLFDLG) traverse the membrane as a helical segment. The Periplasmic portion of the chain corresponds to 360–366 (KSAHQPE). The chain crosses the membrane as a helical span at residues 367–387 (LPWMMLGIIGIFTFLALGWQF). Residues 388 to 401 (SQKRAARRLLERDA) lie on the Cytoplasmic side of the membrane.

This sequence belongs to the major facilitator superfamily. DHA1 family. MdtH (TC 2.A.1.2.21) subfamily.

It localises to the cell inner membrane. The polypeptide is Multidrug resistance protein MdtH (Shigella dysenteriae serotype 1 (strain Sd197)).